Consider the following 328-residue polypeptide: DNA-directed RNA polymerase subunit alpha (328 aa).

Positions 1–231 (MIYQMQMPTK…DHITFFANFS (231 aa)) are alpha N-terminal domain (alpha-NTD). The alpha C-terminal domain (alpha-CTD) stretch occupies residues 247-328 (DEFESMRKLL…MDITRYQLKG (82 aa)).

It belongs to the RNA polymerase alpha chain family. In terms of assembly, homodimer. The RNAP catalytic core consists of 2 alpha, 1 beta, 1 beta' and 1 omega subunit. When a sigma factor is associated with the core the holoenzyme is formed, which can initiate transcription.

It carries out the reaction RNA(n) + a ribonucleoside 5'-triphosphate = RNA(n+1) + diphosphate. Functionally, DNA-dependent RNA polymerase catalyzes the transcription of DNA into RNA using the four ribonucleoside triphosphates as substrates. This Chlorobaculum tepidum (strain ATCC 49652 / DSM 12025 / NBRC 103806 / TLS) (Chlorobium tepidum) protein is DNA-directed RNA polymerase subunit alpha.